The primary structure comprises 103 residues: Gene 56 protein (103 aa).

The Glutaredoxin domain occupies Trp-9–Leu-103.

The chain is Gene 56 protein (56) from Mycobacterium phage L5 (Mycobacteriophage L5).